Reading from the N-terminus, the 197-residue chain is Ribonuclease HII (197 aa).

Residues 9 to 197 (KLIAGVDEVG…APVKKALEQF (189 aa)) form the RNase H type-2 domain. D15, E16, and D107 together coordinate a divalent metal cation.

Belongs to the RNase HII family. It depends on Mn(2+) as a cofactor. The cofactor is Mg(2+).

It localises to the cytoplasm. The catalysed reaction is Endonucleolytic cleavage to 5'-phosphomonoester.. Its function is as follows. Endonuclease that specifically degrades the RNA of RNA-DNA hybrids. The chain is Ribonuclease HII (rnhB) from Haemophilus influenzae (strain ATCC 51907 / DSM 11121 / KW20 / Rd).